The sequence spans 346 residues: ATP-dependent 6-phosphofructokinase (346 aa).

ATP contacts are provided by residues Gly-13, 76-77 (RL), and 106-109 (GEGT). Glu-107 is a binding site for Mg(2+). Residues 129 to 131 (TID), Arg-166, 173 to 175 (MGR), Glu-226, Arg-270, and 276 to 279 (HIQR) contribute to the substrate site. The active-site Proton acceptor is the Asp-131.

Belongs to the phosphofructokinase type A (PFKA) family. Mixed-substrate PFK group III subfamily. As to quaternary structure, homodimer or homotetramer. It depends on Mg(2+) as a cofactor.

The protein localises to the cytoplasm. The catalysed reaction is beta-D-fructose 6-phosphate + ATP = beta-D-fructose 1,6-bisphosphate + ADP + H(+). Its pathway is carbohydrate degradation; glycolysis; D-glyceraldehyde 3-phosphate and glycerone phosphate from D-glucose: step 3/4. Catalyzes the phosphorylation of D-fructose 6-phosphate to fructose 1,6-bisphosphate by ATP, the first committing step of glycolysis. This Corynebacterium efficiens (strain DSM 44549 / YS-314 / AJ 12310 / JCM 11189 / NBRC 100395) protein is ATP-dependent 6-phosphofructokinase.